A 276-amino-acid polypeptide reads, in one-letter code: Glutamate 5-kinase (276 aa).

Lys14 is a binding site for ATP. Residues Ser54, Asp141, and Asn157 each contribute to the substrate site. Residues 177-178 (SD) and 219-225 (TGGMLTK) each bind ATP.

It belongs to the glutamate 5-kinase family.

It is found in the cytoplasm. The catalysed reaction is L-glutamate + ATP = L-glutamyl 5-phosphate + ADP. It functions in the pathway amino-acid biosynthesis; L-proline biosynthesis; L-glutamate 5-semialdehyde from L-glutamate: step 1/2. Catalyzes the transfer of a phosphate group to glutamate to form L-glutamate 5-phosphate. The sequence is that of Glutamate 5-kinase from Listeria monocytogenes serotype 4b (strain CLIP80459).